The sequence spans 222 residues: Extracellular protein ARB_03106 (222 aa).

The first 18 residues, 1–18 (MRLHSVLAVATAVGCAVA), serve as a signal peptide directing secretion. 2 N-linked (GlcNAc...) asparagine glycosylation sites follow: N113 and N126.

The protein resides in the secreted. This is Extracellular protein ARB_03106 from Arthroderma benhamiae (strain ATCC MYA-4681 / CBS 112371) (Trichophyton mentagrophytes).